Here is a 381-residue protein sequence, read N- to C-terminus: Alkanesulfonate monooxygenase (381 aa).

The protein belongs to the SsuD family. Homotetramer.

It catalyses the reaction an alkanesulfonate + FMNH2 + O2 = an aldehyde + FMN + sulfite + H2O + 2 H(+). Its function is as follows. Catalyzes the desulfonation of aliphatic sulfonates. This is Alkanesulfonate monooxygenase from Citrobacter koseri (strain ATCC BAA-895 / CDC 4225-83 / SGSC4696).